The sequence spans 108 residues: Movement protein (108 aa).

Residues 1 to 25 (MDASSQYSALPYPQPPRVPSAAPSA) are disordered. The helical transmembrane segment at 35–55 (EIVIFTFVSVLALYLLWLWVL) threads the bilayer. Residues 73 to 108 (LIFGPGERPPVASADGSRPVPDPSPPVRRDLDLSRV) form a disordered region. The span at 99-108 (VRRDLDLSRV) shows a compositional bias: basic and acidic residues.

Belongs to the mastrevirus movement protein family. Interacts with the capsid protein (CP). Part of a MP-CP-viral DNA complex.

It is found in the host membrane. In terms of biological role, involved in the viral transport within, and between cells. This Megathyrsus maximus (PanSV) protein is Movement protein.